A 207-amino-acid polypeptide reads, in one-letter code: Succinyl-CoA:3-ketoacid coenzyme A transferase subunit B (207 aa).

The active site involves glutamate 43.

It belongs to the 3-oxoacid CoA-transferase subunit B family. In terms of assembly, heterodimer of a subunit A and a subunit B.

The catalysed reaction is a 3-oxo acid + succinyl-CoA = a 3-oxoacyl-CoA + succinate. In Helicobacter pylori (strain ATCC 700392 / 26695) (Campylobacter pylori), this protein is Succinyl-CoA:3-ketoacid coenzyme A transferase subunit B (scoB).